Here is a 46-residue protein sequence, read N- to C-terminus: Cuticle protein 4.9 (46 aa).

In terms of biological role, component of the cuticle of migratory locust which contains more than 100 different structural proteins. This chain is Cuticle protein 4.9, found in Locusta migratoria (Migratory locust).